Consider the following 1444-residue polypeptide: Rho GTPase-activating protein 31 (1444 aa).

A Rho-GAP domain is found at 21–216 (CDLTEYLESS…FILNHVDQIF (196 aa)). Serine 272 carries the post-translational modification Phosphoserine. A Phosphothreonine modification is found at threonine 286. Serine 346, serine 349, and serine 387 each carry phosphoserine. Positions 398 to 427 (WGQEGMPPGAEGGFDVSSDRSHLQGAQARP) are disordered. Phosphoserine is present on serine 476. The disordered stretch occupies residues 504–631 (TNSTPCRTPP…ESSTLQESPR (128 aa)). The segment covering 515–534 (ELQSLSSLEEFSFHGSESGG) has biased composition (low complexity). Over residues 600–619 (NELEKRPNPEKVVEEGREAG) the composition is skewed to basic and acidic residues. The residue at position 679 (threonine 679) is a Phosphothreonine. Disordered stretches follow at residues 688–893 (SSLG…EDDT) and 906–1108 (EPWE…SSLN). 2 positions are modified to phosphoserine: serine 701 and serine 712. The span at 722–734 (PANQSTQGASTAA) shows a compositional bias: polar residues. Over residues 735 to 745 (SREKPEPEQGL) the composition is skewed to basic and acidic residues. A compositionally biased stretch (pro residues) spans 777 to 790 (LSPPLPPAPPPPTP). Residue serine 778 is modified to Phosphoserine. Phosphothreonine is present on threonine 789. Basic and acidic residues predominate over residues 803 to 817 (GPEREDSSRKLRTDL). Residues 822–834 (LKSQDSPEISSLC) are compositionally biased toward polar residues. Basic and acidic residues predominate over residues 839 to 848 (ATPRHSDKQN). Polar residues predominate over residues 960–977 (TVKSQWTLEVPSSSSCAN). The residue at position 974 (serine 974) is a Phosphoserine. The span at 992–1008 (PRREITGWDEKALRSFR) shows a compositional bias: basic and acidic residues. A compositionally biased stretch (polar residues) spans 1028-1038 (VQPNPAETSPI). Residues 1064–1075 (GPESSKESSPSV) show a composition bias toward low complexity. Phosphoserine occurs at positions 1105, 1106, and 1178. Composition is skewed to polar residues over residues 1211–1224 (QIPQPLPSQSSGEN) and 1234–1245 (EGPSSTSGTTQK). Residues 1211–1346 (QIPQPLPSQS…HRSRPGRPQS (136 aa)) form a disordered region. Positions 1246-1265 (PAKDDSPSSLESSKEEKPKQ) are enriched in basic and acidic residues. 2 stretches are compositionally biased toward polar residues: residues 1292–1303 (PGSSNLLSTQDA) and 1314–1323 (TEPSGDNLLS).

As to quaternary structure, interacts with ITSN1, which inhibits GAP activity. Interacts with PARVA. Interacts with GTP-loaded RHOU. In terms of processing, phosphorylation on Thr-789 reduces GAP activity.

It localises to the cell projection. It is found in the lamellipodium. Its subcellular location is the cell junction. The protein localises to the focal adhesion. Functions as a GTPase-activating protein (GAP) for RAC1 and CDC42. Required for cell spreading, polarized lamellipodia formation and cell migration. This is Rho GTPase-activating protein 31 (ARHGAP31) from Homo sapiens (Human).